The chain runs to 688 residues: Potassium-transporting ATPase ATP-binding subunit (688 aa).

Transmembrane regions (helical) follow at residues 34 to 54 (PVMF…LAIL), 62 to 82 (AMFT…ANMA), 219 to 239 (VALT…TATL), and 260 to 280 (VLVA…LSAI). D313 functions as the 4-aspartylphosphate intermediate in the catalytic mechanism. ATP is bound by residues D350, E354, 383–390 (FSAQTRMS), and K401. Positions 524 and 528 each coordinate Mg(2+). 3 helical membrane passes run 594-614 (FAII…LNIM), 622-642 (AILS…PLAL), and 662-682 (IYGL…DLLL).

Belongs to the cation transport ATPase (P-type) (TC 3.A.3) family. Type IA subfamily. The system is composed of three essential subunits: KdpA, KdpB and KdpC.

The protein localises to the cell inner membrane. The catalysed reaction is K(+)(out) + ATP + H2O = K(+)(in) + ADP + phosphate + H(+). Its function is as follows. Part of the high-affinity ATP-driven potassium transport (or Kdp) system, which catalyzes the hydrolysis of ATP coupled with the electrogenic transport of potassium into the cytoplasm. This subunit is responsible for energy coupling to the transport system and for the release of the potassium ions to the cytoplasm. This chain is Potassium-transporting ATPase ATP-binding subunit, found in Yersinia pseudotuberculosis serotype O:1b (strain IP 31758).